A 345-amino-acid chain; its full sequence is UPF0284 protein STK_21430 (345 aa).

It belongs to the UPF0284 family.

The chain is UPF0284 protein STK_21430 from Sulfurisphaera tokodaii (strain DSM 16993 / JCM 10545 / NBRC 100140 / 7) (Sulfolobus tokodaii).